Consider the following 661-residue polypeptide: Meiotic coiled-coil protein 1 (661 aa).

5 coiled-coil regions span residues 38–78, 100–121, 143–184, 304–320, and 360–387; these read LDAL…IIEE, RAIY…ERLS, DIKL…LSIK, ELIQ…EVDL, and LKRL…DNEK. Disordered stretches follow at residues 410-446, 467-562, and 573-592; these read QNQE…LRNI, LIDR…TPAS, and LSRT…TPTQ. Residues 414-430 show a composition bias toward low complexity; that stretch reads NISSNDNSKSSPESSPP. Over residues 436 to 445 the composition is skewed to basic and acidic residues; that stretch reads GKIENKKLRN. Composition is skewed to polar residues over residues 472–481, 548–562, and 582–592; these read VNQSPDTRSV, HNSV…TPAS, and FTNSLDDTPTQ.

This chain is Meiotic coiled-coil protein 1 (mcp1), found in Schizosaccharomyces pombe (strain 972 / ATCC 24843) (Fission yeast).